A 483-amino-acid polypeptide reads, in one-letter code: Glutamate--tRNA ligase (483 aa).

Positions 9–19 (PSPTGFLHIGN) match the 'HIGH' region motif. A 'KMSKS' region motif is present at residues 253 to 257 (KLSKR). Residue K256 coordinates ATP.

This sequence belongs to the class-I aminoacyl-tRNA synthetase family. Glutamate--tRNA ligase type 1 subfamily. Monomer.

The protein localises to the cytoplasm. It carries out the reaction tRNA(Glu) + L-glutamate + ATP = L-glutamyl-tRNA(Glu) + AMP + diphosphate. In terms of biological role, catalyzes the attachment of glutamate to tRNA(Glu) in a two-step reaction: glutamate is first activated by ATP to form Glu-AMP and then transferred to the acceptor end of tRNA(Glu). The protein is Glutamate--tRNA ligase of Mycoplasma mycoides subsp. mycoides SC (strain CCUG 32753 / NCTC 10114 / PG1).